The sequence spans 595 residues: Fructan 1-exohydrolase (595 aa).

Residues 1-20 form the signal peptide; sequence MAQAWAFLLPLLVLGSYVTS. Asp74 is an active-site residue. N-linked (GlcNAc...) asparagine glycans are attached at residues Asn167, Asn235, and Asn247. A disulfide bond links Cys445 and Cys491. The N-linked (GlcNAc...) asparagine glycan is linked to Asn566.

It belongs to the glycosyl hydrolase 32 family.

The enzyme catalyses Hydrolysis of terminal, non-reducing (2-&gt;1)-linked beta-D-fructofuranose residues in fructans.. Inhibited by sucrose. In terms of biological role, hydrolyzes inulin-type beta-(2,1)-fructans. May play a role as a beta-(2,1)-trimmer during graminan biosynthesis. In Aegilops speltoides (Goatgrass), this protein is Fructan 1-exohydrolase.